The following is a 972-amino-acid chain: 116 kDa U5 small nuclear ribonucleoprotein component (972 aa).

At Met-1 the chain carries N-acetylmethionine. The interval 1–54 is disordered; it reads MDTDLYDEFGNYIGPELDSDEDDDELGRETKDLDEMDDDDDDDDIGDHDDDHPG. Composition is skewed to acidic residues over residues 17–26 and 34–48; these read LDSDEDDDEL and DEMD…IGDH. Phosphoserine is present on Ser-19. Lys-64 is covalently cross-linked (Glycyl lysine isopeptide (Lys-Gly) (interchain with G-Cter in SUMO1); alternate). Lys-64 participates in a covalent cross-link: Glycyl lysine isopeptide (Lys-Gly) (interchain with G-Cter in SUMO2); alternate. The residue at position 86 (Thr-86) is a Phosphothreonine. The tr-type G domain maps to 127-409; it reads ELIRNVTLCG…GIHLTKEELK (283 aa). GTP-binding positions include 136–143, 204–208, and 258–261; these read GHLHHGKT, DTPGH, and NKID.

It belongs to the TRAFAC class translation factor GTPase superfamily. Classic translation factor GTPase family. EF-G/EF-2 subfamily. Component of the U5 snRNP and the U4/U6-U5 tri-snRNP complex, a building block of the spliceosome. The U4/U6-U5 tri-snRNP complex is composed of the U4, U6 and U5 snRNAs and at least PRPF3, PRPF4, PRPF6, PRPF8, PRPF31, SNRNP200, TXNL4A, SNRNP40, DDX23, CD2BP2, PPIH, SNU13, EFTUD2, SART1 and USP39. Component of the pre-catalytic, catalytic and post-catalytic spliceosome complexes. Component of the minor spliceosome, which splices U12-type introns. Within this complex, interacts with CRIPT. Interacts with ERBB4 and PRPF8. Interacts with PIH1D1. Interacts with RPAP3 and URI1 in a ZNHIT2-dependent manner. Interacts with NRDE2. Interacts with FAM50A. Interacts with UBL5.

The protein localises to the nucleus. Its function is as follows. Required for pre-mRNA splicing as component of the spliceosome, including pre-catalytic, catalytic and post-catalytic spliceosomal complexes. Component of the U5 snRNP and the U4/U6-U5 tri-snRNP complex, a building block of the spliceosome. As a component of the minor spliceosome, involved in the splicing of U12-type introns in pre-mRNAs. The protein is 116 kDa U5 small nuclear ribonucleoprotein component (EFTUD2) of Pongo abelii (Sumatran orangutan).